A 22-amino-acid polypeptide reads, in one-letter code: Chlorophyllase type 1 (22 aa).

Belongs to the AB hydrolase superfamily. Lipase family.

It carries out the reaction a chlorophyll + H2O = a chlorophyllide + phytol + H(+). Its pathway is porphyrin-containing compound metabolism; chlorophyll degradation. Functionally, catalyzes the hydrolysis of ester bond in chlorophyll to yield chlorophyllide and phytol. This is Chlorophyllase type 1 from Chenopodium album (Fat hen).